The following is a 309-amino-acid chain: MTAHSLIDAIRAAAPDLRGRLLENQSLADLTWFRVGGPAQVLFSPADEADLSAFLAALDPSVPVTVIGLGSNLIVRDGGIPGVTIRLGGKAFGSVEIDGETIRSGTAVPDMRLAKAAAEASLDGLAFFRGIPGSVGGALRMNAGAHGGETTDVLVEVRGIDRKGEVHRFTHAEMGFRYRHSSAPDDVIFTGATFRGRPGDREAIEAEMERVTAAREAAQPIRERTGGSTFKNPEGGKAWQLIDAAGCRGLIRGGAQVSEMHCNFLINRGGATAADIEGLGEEVRRRVREHSGFELHWEIKRIGVEASPA.

The region spanning arginine 34–isoleucine 221 is the FAD-binding PCMH-type domain. Arginine 179 is an active-site residue. Catalysis depends on serine 228, which acts as the Proton donor. Residue glutamate 298 is part of the active site.

It belongs to the MurB family. FAD serves as cofactor.

The protein resides in the cytoplasm. The catalysed reaction is UDP-N-acetyl-alpha-D-muramate + NADP(+) = UDP-N-acetyl-3-O-(1-carboxyvinyl)-alpha-D-glucosamine + NADPH + H(+). It functions in the pathway cell wall biogenesis; peptidoglycan biosynthesis. Cell wall formation. The sequence is that of UDP-N-acetylenolpyruvoylglucosamine reductase from Methylorubrum extorquens (strain CM4 / NCIMB 13688) (Methylobacterium extorquens).